A 459-amino-acid polypeptide reads, in one-letter code: Cysteine--tRNA ligase (459 aa).

Cysteine 28 contacts Zn(2+). The 'HIGH' region motif lies at 30 to 40; it reads VTVYDLCHFGH. 3 residues coordinate Zn(2+): cysteine 209, histidine 234, and glutamate 238. Positions 266 to 270 match the 'KMSKS' region motif; sequence KMSKS. ATP is bound at residue lysine 269.

This sequence belongs to the class-I aminoacyl-tRNA synthetase family. Monomer. The cofactor is Zn(2+).

Its subcellular location is the cytoplasm. It catalyses the reaction tRNA(Cys) + L-cysteine + ATP = L-cysteinyl-tRNA(Cys) + AMP + diphosphate. The chain is Cysteine--tRNA ligase from Actinobacillus pleuropneumoniae serotype 5b (strain L20).